A 205-amino-acid chain; its full sequence is CMRF35-like molecule 2 (205 aa).

A signal peptide spans 1–17 (MWLLPALLLLCLSGCLS). In terms of domain architecture, Ig-like V-type spans 18-120 (LKGPGSVTGT…VLDSWSRDPS (103 aa)). At 18 to 173 (LKGPGSVTGT…NSGFRLSSPH (156 aa)) the chain is on the extracellular side. Residues C36 and C104 are joined by a disulfide bond. N154 is a glycosylation site (N-linked (GlcNAc...) asparagine). The chain crosses the membrane as a helical span at residues 174-194 (FLLVVLLKLPLLLSMLGAVFW). Topologically, residues 195–205 (VNRPQWAPPGR) are cytoplasmic.

The protein belongs to the CD300 family. Interacts with TYROBP. Post-translationally, N-glycosylated. As to expression, present on the surface of mature hematopoietic cells of the monocyte and myeloid lineages (at protein level).

The protein resides in the cell membrane. Its function is as follows. Probably acts as an activating receptor. This Homo sapiens (Human) protein is CMRF35-like molecule 2 (CD300E).